The following is a 407-amino-acid chain: MGDNLMDKVTAFGERLKIGGSEVSNKISAGVSSMSFKVKELFQGPNPTDKIVEDATTENLEEPDWDMNLEICDMINQETINSVELIRGIKKRIMMKQPRIQYLALVLLETCVKNCEKAFSEVAAERVLDEMVKLIDDPQTVVNNRNKALMLIEAWGESTSELRYLPVFEETYKSLKARGIRFPGRDNESLAPIFTPARSTPAPELNADLPQHVHEPAHIQYDVPVRSFTAEQTKEAFDIARNSIELLSTVLSSSPQHDALQDDLTTTLVQQCRQSQTTVQRIIETAGENEALLFEALNVNDELVKTLSKYEEMNKPSAPLTSHEPAMIPVAEEPDDSPIHGREESLVRKSSGVRGGFHGGGGSGDDMMDDLDEMIFGKKNGCDSSTNPDHDPKKEQSSSKNDDLIRF.

Gly2 is subject to N-acetylglycine. One can recognise a VHS domain in the interval Ala55–Pro183. A GAT domain is found at Phe228–Lys315. Residues Lys315 to Phe407 form a disordered region. Residue Ser337 is modified to Phosphoserine. Residues Ser337–Val347 show a composition bias toward basic and acidic residues. Positions Val353 to Gly364 are enriched in gly residues. Basic and acidic residues predominate over residues Pro388–Phe407.

The protein belongs to the TOM1 family. In terms of tissue distribution, ubiquitously expressed.

It localises to the membrane. In terms of biological role, might contribute to the loading of the ESCRT machinery. This is TOM1-like protein 1 from Arabidopsis thaliana (Mouse-ear cress).